A 503-amino-acid chain; its full sequence is Aromatase (503 aa).

The next 2 helical transmembrane spans lie at 19-39 (EAMPAATMPVLLLTGLFLLVW) and 303-323 (MLIAAPDTMSVSLFFMLFLIA). Substrate-binding residues include aspartate 309 and methionine 374. Position 437 (cysteine 437) interacts with heme.

The protein belongs to the cytochrome P450 family. Requires heme as cofactor. Post-translationally, phosphorylated in vitro by PKA and PKG/PRKG1. These phosphorylations inhibit the catalytic activity as measured by estrone synthesis from androstenedione (36% decrease for PKA and 30% for PKG/PRKG1). As to expression, widely expressed, including in adult and fetal brain, placenta, skin fibroblasts, adipose tissue and gonads.

It localises to the endoplasmic reticulum membrane. The protein resides in the microsome membrane. The enzyme catalyses testosterone + 3 reduced [NADPH--hemoprotein reductase] + 3 O2 = 17beta-estradiol + formate + 3 oxidized [NADPH--hemoprotein reductase] + 4 H2O + 4 H(+). The catalysed reaction is androst-4-ene-3,17-dione + 3 reduced [NADPH--hemoprotein reductase] + 3 O2 = estrone + formate + 3 oxidized [NADPH--hemoprotein reductase] + 4 H2O + 4 H(+). It carries out the reaction androst-4-ene-3,17-dione + reduced [NADPH--hemoprotein reductase] + O2 = 19-hydroxyandrost-4-ene-3,17-dione + oxidized [NADPH--hemoprotein reductase] + H2O + H(+). It catalyses the reaction 19-hydroxyandrost-4-ene-3,17-dione + reduced [NADPH--hemoprotein reductase] + O2 = 19-oxo-androst-4-ene-3,17-dione + oxidized [NADPH--hemoprotein reductase] + 2 H2O + H(+). The enzyme catalyses 19-oxo-androst-4-ene-3,17-dione + reduced [NADPH--hemoprotein reductase] + O2 = estrone + formate + oxidized [NADPH--hemoprotein reductase] + H2O + 2 H(+). The catalysed reaction is estrone + reduced [NADPH--hemoprotein reductase] + O2 = 2-hydroxyestrone + oxidized [NADPH--hemoprotein reductase] + H2O + H(+). It carries out the reaction 17beta-hydroxy-5alpha-androstan-3-one + reduced [NADPH--hemoprotein reductase] + O2 = 17beta,19-dihydroxy-3-oxo-5alpha-androstanone + oxidized [NADPH--hemoprotein reductase] + H2O + H(+). It catalyses the reaction 17beta,19-dihydroxy-3-oxo-5alpha-androstanone + reduced [NADPH--hemoprotein reductase] + O2 = 17beta-hydroxy-3,19-dioxo-5alpha-androstanone + oxidized [NADPH--hemoprotein reductase] + 2 H2O + H(+). The enzyme catalyses 17beta-hydroxy-3,19-dioxo-5alpha-androstanone + reduced [NADPH--hemoprotein reductase] + O2 = 17beta-hydroxy-3-oxo-19-nor-5alpha-androst-1-ene + formate + oxidized [NADPH--hemoprotein reductase] + H2O + 2 H(+). It participates in steroid hormone biosynthesis. Functionally, a cytochrome P450 monooxygenase that catalyzes the conversion of C19 androgens, androst-4-ene-3,17-dione (androstenedione) and testosterone to the C18 estrogens, estrone and estradiol, respectively. Catalyzes three successive oxidations of C19 androgens: two conventional oxidations at C19 yielding 19-hydroxy and 19-oxo/19-aldehyde derivatives, followed by a third oxidative aromatization step that involves C1-beta hydrogen abstraction combined with cleavage of the C10-C19 bond to yield a phenolic A ring and formic acid. Alternatively, the third oxidative reaction yields a 19-norsteroid and formic acid. Converts dihydrotestosterone to delta1,10-dehydro 19-nordihydrotestosterone and may play a role in homeostasis of this potent androgen. Also displays 2-hydroxylase activity toward estrone. Mechanistically, uses molecular oxygen inserting one oxygen atom into a substrate, and reducing the second into a water molecule, with two electrons provided by NADPH via cytochrome P450 reductase (CPR; NADPH-ferrihemoprotein reductase). This chain is Aromatase, found in Homo sapiens (Human).